Reading from the N-terminus, the 900-residue chain is DNA mismatch repair protein MutS (900 aa).

637–644 provides a ligand contact to ATP; sequence GPNMAGKS.

The protein belongs to the DNA mismatch repair MutS family.

In terms of biological role, this protein is involved in the repair of mismatches in DNA. It is possible that it carries out the mismatch recognition step. This protein has a weak ATPase activity. The sequence is that of DNA mismatch repair protein MutS from Methanosarcina acetivorans (strain ATCC 35395 / DSM 2834 / JCM 12185 / C2A).